A 447-amino-acid polypeptide reads, in one-letter code: Ribosomal protein uS12 methylthiotransferase RimO (447 aa).

Residues 10-120 (PKVGFVSLGC…VVNAVHDVVP (111 aa)) enclose the MTTase N-terminal domain. [4Fe-4S] cluster is bound by residues Cys-19, Cys-55, Cys-84, Cys-153, Cys-157, and Cys-160. One can recognise a Radical SAM core domain in the interval 139 to 377 (LTPRHYAYLK…MAHQQAISAA (239 aa)). One can recognise a TRAM domain in the interval 380–447 (QMKIGKEIEV…DEYDLWAEML (68 aa)).

It belongs to the methylthiotransferase family. RimO subfamily. It depends on [4Fe-4S] cluster as a cofactor.

It localises to the cytoplasm. It catalyses the reaction L-aspartate(89)-[ribosomal protein uS12]-hydrogen + (sulfur carrier)-SH + AH2 + 2 S-adenosyl-L-methionine = 3-methylsulfanyl-L-aspartate(89)-[ribosomal protein uS12]-hydrogen + (sulfur carrier)-H + 5'-deoxyadenosine + L-methionine + A + S-adenosyl-L-homocysteine + 2 H(+). Its function is as follows. Catalyzes the methylthiolation of an aspartic acid residue of ribosomal protein uS12. The chain is Ribosomal protein uS12 methylthiotransferase RimO from Pseudomonas savastanoi pv. phaseolicola (strain 1448A / Race 6) (Pseudomonas syringae pv. phaseolicola (strain 1448A / Race 6)).